A 107-amino-acid polypeptide reads, in one-letter code: Death-associated protein-like 1 (107 aa).

Residues 1–23 (MANEVQDLLSPRKGGHPPAVKAG) form a disordered region.

Expressed in hair follicle (at protein level).

In terms of biological role, may play a role in the early stages of epithelial differentiation or in apoptosis. This is Death-associated protein-like 1 (DAPL1) from Homo sapiens (Human).